Reading from the N-terminus, the 150-residue chain is Monooxygenase dmxR10 (150 aa).

It belongs to the avfA family.

The protein operates within secondary metabolite biosynthesis. Its function is as follows. Monooxygenase; part of the gene cluster that mediates the biosynthesis of the dimeric xanthones cryptosporioptides. The pathway begins with the synthesis of atrochrysone thioester by the polyketide synthase dmx-nrPKS. The atrochrysone carboxyl ACP thioesterase dmxR1 then breaks the thioester bond and releases the atrochrysone carboxylic acid from dmx-nrPKS. Atrochrysone carboxylic acid is decarboxylated by the decarboxylase dmxR15, and oxidized by the anthrone oxygenase dmxR16 to yield emodin. Emodin is then reduced to emodin hydroquinone by the oxidoreductase dmxR7. A-ring reduction by the short chain dehydrogenase dmxR18, dehydration by the scytalone dehydratase-like protein dmxR17 and probable spontaneous re-oxidation, results in overall deoxygenation to chrysophanol. Baeyer-Villiger oxidation by the Baeyer-Villiger monooxygenase (BVMO) dmxR6 then yields monodictylactone in equilibrium with monodictyphenone. In the case of the cryptosporioptides biosynthesis, monodictylactone is reduced at C-12 to an alcohol (by the short chain dehydrogenases dmxR12 or dmxR8) and hydroxylated at C-5 by dmxR9, yielding the electron-rich aromatic which could eliminate H(2)O to form the ortho-quinonemethide, followed by tautomerisation to paraquinone and complete the formal reduction to produce the 10-methylgroup. Conjugate addition of C-4a-OH to the resulting paraquinone by the monooxygenase dmxR10 then gives cyclohexadienone, which is then reduced at C-5 by the short chain dehydrogenase dmxR3 to give the dihydroxanthone. The 6,7-epoxide in the cryptosporioptides could be introduced by the cytochrome P450 monooxygenase dmxL3. The highly reducing PKS dmxL2 manufactures butyrate, which is further carboxylated by dmxL1 to form ethylmalonate. It is not yet clear whether the carboxylation occurs while the butyrate is attached to the ACP of dmxL2, but this unusual fungal metabolite could then be esterified to O-5 by the O-acetyltransferase dmxR13. Finally, dimerization performed by dmxR5 gives the observed dimers cryptosporioptides A, B and C as the final products of the pathway. The polypeptide is Monooxygenase dmxR10 (Cryptosporiopsis sp. (strain 8999)).